Consider the following 550-residue polypeptide: MLKNINPTQTQAWKALTAHFESAQDMDLKELFAQDAARFDKYSARFGSDILVDYSKNLINEETLKHLFALANETELKSAIEAMFSGEAINQTEGRAVLHTALRNRTNTPVMVDGEDVMPAVNAVLEKMKSFTDRVIGGEWKGYTGKAITDIVNIGIGGSDLGPYMVTEALAPYKNHLNLHFVSNVDGTHIVETLKKVNPETTLFLIASKTFTTQETMTNAHTARDWFLESAGDQAHVAKHFAALSTNATAVSEFGIDTANMFEFWDWVGGRYSLWSAIGLSIALAVGYDNFVELLDGAHEMDKHFVSTDLESNIPVILALIGIWYNNFHGAESEAILPYDQYMHRFAAYFQQGNMESNGKYVDREGNAVTYQTGPIIWGEPGTNGQHAFYQLIHQGTKLIPCDFIAPAISHNPAGDHHQKLMSNFFAQTEALAFGKSEETVKEELVKAGKNAEEVAAIAPFKVFEGNRPTNSILVKQITPRTLGNLIAMYEHKIFVQGVIWNIFSFDQWGVELGKQLANQILPELADASQINSHDSSTNGLINAFKAFKA.

Glu356 serves as the catalytic Proton donor. Residues His387 and Lys515 contribute to the active site.

This sequence belongs to the GPI family.

The protein resides in the cytoplasm. The enzyme catalyses alpha-D-glucose 6-phosphate = beta-D-fructose 6-phosphate. The protein operates within carbohydrate biosynthesis; gluconeogenesis. It functions in the pathway carbohydrate degradation; glycolysis; D-glyceraldehyde 3-phosphate and glycerone phosphate from D-glucose: step 2/4. Its function is as follows. Catalyzes the reversible isomerization of glucose-6-phosphate to fructose-6-phosphate. In Vibrio parahaemolyticus serotype O3:K6 (strain RIMD 2210633), this protein is Glucose-6-phosphate isomerase.